Reading from the N-terminus, the 75-residue chain is Small integral membrane protein 7 (75 aa).

A signal peptide spans 1-17; that stretch reads MIGDILLFGTLLMNAGA. Topologically, residues 18-53 are extracellular; that stretch reads VLNFKLKKKDTQGFGEESKEPSTGDNIREFLLSLRY. The helical transmembrane segment at 54–74 threads the bilayer; it reads FRIFIALWNVFMMLCMIVLFG. Position 75 (Ser75) is a topological domain, cytoplasmic.

Belongs to the SMIM7 family.

It is found in the membrane. In Mus musculus (Mouse), this protein is Small integral membrane protein 7 (Smim7).